The following is a 237-amino-acid chain: Phosphoribosylaminoimidazole-succinocarboxamide synthase (237 aa).

It belongs to the SAICAR synthetase family.

The catalysed reaction is 5-amino-1-(5-phospho-D-ribosyl)imidazole-4-carboxylate + L-aspartate + ATP = (2S)-2-[5-amino-1-(5-phospho-beta-D-ribosyl)imidazole-4-carboxamido]succinate + ADP + phosphate + 2 H(+). It participates in purine metabolism; IMP biosynthesis via de novo pathway; 5-amino-1-(5-phospho-D-ribosyl)imidazole-4-carboxamide from 5-amino-1-(5-phospho-D-ribosyl)imidazole-4-carboxylate: step 1/2. In Sodalis glossinidius (strain morsitans), this protein is Phosphoribosylaminoimidazole-succinocarboxamide synthase.